Consider the following 158-residue polypeptide: Transcription elongation factor GreA (158 aa).

Belongs to the GreA/GreB family.

Necessary for efficient RNA polymerase transcription elongation past template-encoded arresting sites. The arresting sites in DNA have the property of trapping a certain fraction of elongating RNA polymerases that pass through, resulting in locked ternary complexes. Cleavage of the nascent transcript by cleavage factors such as GreA or GreB allows the resumption of elongation from the new 3'terminus. GreA releases sequences of 2 to 3 nucleotides. The polypeptide is Transcription elongation factor GreA (Polaromonas naphthalenivorans (strain CJ2)).